A 373-amino-acid chain; its full sequence is Glutamate 5-kinase 2 (373 aa).

Lysine 11 is a binding site for ATP. The substrate site is built by serine 51, aspartate 138, and asparagine 150. ATP is bound by residues 170 to 171 (SD) and 212 to 218 (TGGMKSK). One can recognise a PUA domain in the interval 279 to 355 (EGDIVVHNES…TNQETAASSQ (77 aa)).

It belongs to the glutamate 5-kinase family.

The protein resides in the cytoplasm. The enzyme catalyses L-glutamate + ATP = L-glutamyl 5-phosphate + ADP. Its pathway is amino-acid biosynthesis; L-proline biosynthesis; L-glutamate 5-semialdehyde from L-glutamate: step 1/2. Catalyzes the transfer of a phosphate group to glutamate to form L-glutamate 5-phosphate. The protein is Glutamate 5-kinase 2 of Bacillus licheniformis (strain ATCC 14580 / DSM 13 / JCM 2505 / CCUG 7422 / NBRC 12200 / NCIMB 9375 / NCTC 10341 / NRRL NRS-1264 / Gibson 46).